The following is a 401-amino-acid chain: Large ribosomal subunit protein uL3 (401 aa).

The interval 1–22 is disordered; sequence MSHRKFSAPRHGHMGFTPKKRS.

The protein belongs to the universal ribosomal protein uL3 family.

It is found in the cytoplasm. Its function is as follows. The L3 protein is a component of the large subunit of cytoplasmic ribosomes. In Caenorhabditis elegans, this protein is Large ribosomal subunit protein uL3 (rpl-3).